A 228-amino-acid polypeptide reads, in one-letter code: Thrombin-like enzyme gyroxin analog (228 aa).

One can recognise a Peptidase S1 domain in the interval 1-222; it reads VIGGDECNIN…YLDWIQSVIA (222 aa). 6 disulfides stabilise this stretch: C7–C138, C28–C44, C78–C227, C117–C183, C149–C162, and C173–C198. H43 (charge relay system) is an active-site residue. N-linked (GlcNAc...) asparagine glycans are attached at residues N45 and N81. Catalysis depends on D88, which acts as the Charge relay system. Residue N145 is glycosylated (N-linked (GlcNAc...) asparagine). S177 acts as the Charge relay system in catalysis. N224 carries N-linked (GlcNAc...) asparagine glycosylation.

Belongs to the peptidase S1 family. Snake venom subfamily. In terms of assembly, monomer. In terms of tissue distribution, expressed by the venom gland.

Its subcellular location is the secreted. The enzyme catalyses Selective cleavage of Arg-|-Xaa bond in fibrinogen, to form fibrin, and release fibrinopeptide A. The specificity of further degradation of fibrinogen varies with species origin of the enzyme.. Inhibited competitively by amidines and guanidines, and irreversibly inhibited by diisopropylfluorophosphate. Thrombin-like snake venom serine protease, that cleaves alpha-chain of fibrinogen (FGA) releases only fibrinopeptide A. Shows coagulant, esterase and amidase activities. Induces the barrel rotation syndrome in mice, which is manifested by gyroxin-like, rapid rolling motions. May also reversibly increase the permeability of the blood brain barrier (BBB) in mice. In Lachesis muta muta (Bushmaster), this protein is Thrombin-like enzyme gyroxin analog.